A 287-amino-acid polypeptide reads, in one-letter code: Pyridoxal 5'-phosphate synthase subunit PdxS (287 aa).

Aspartate 21 contributes to the D-ribose 5-phosphate binding site. Lysine 78 serves as the catalytic Schiff-base intermediate with D-ribose 5-phosphate. Glycine 150 contributes to the D-ribose 5-phosphate binding site. Arginine 162 contacts D-glyceraldehyde 3-phosphate. D-ribose 5-phosphate contacts are provided by residues glycine 211 and 232–233; that span reads GS.

This sequence belongs to the PdxS/SNZ family. As to quaternary structure, in the presence of PdxT, forms a dodecamer of heterodimers.

It carries out the reaction aldehydo-D-ribose 5-phosphate + D-glyceraldehyde 3-phosphate + L-glutamine = pyridoxal 5'-phosphate + L-glutamate + phosphate + 3 H2O + H(+). It functions in the pathway cofactor biosynthesis; pyridoxal 5'-phosphate biosynthesis. Catalyzes the formation of pyridoxal 5'-phosphate from ribose 5-phosphate (RBP), glyceraldehyde 3-phosphate (G3P) and ammonia. The ammonia is provided by the PdxT subunit. Can also use ribulose 5-phosphate and dihydroxyacetone phosphate as substrates, resulting from enzyme-catalyzed isomerization of RBP and G3P, respectively. The sequence is that of Pyridoxal 5'-phosphate synthase subunit PdxS from Tropheryma whipplei (strain TW08/27) (Whipple's bacillus).